The chain runs to 385 residues: 8-amino-7-oxononanoate synthase (385 aa).

Arg21 contacts substrate. 108–109 (GF) contacts pyridoxal 5'-phosphate. Residue His133 participates in substrate binding. Residues Ser179, His207, and Thr233 each contribute to the pyridoxal 5'-phosphate site. Lys236 carries the post-translational modification N6-(pyridoxal phosphate)lysine. Thr352 is a binding site for substrate.

Belongs to the class-II pyridoxal-phosphate-dependent aminotransferase family. BioF subfamily. In terms of assembly, homodimer. Pyridoxal 5'-phosphate serves as cofactor.

It catalyses the reaction 6-carboxyhexanoyl-[ACP] + L-alanine + H(+) = (8S)-8-amino-7-oxononanoate + holo-[ACP] + CO2. The protein operates within cofactor biosynthesis; biotin biosynthesis. Catalyzes the decarboxylative condensation of pimeloyl-[acyl-carrier protein] and L-alanine to produce 8-amino-7-oxononanoate (AON), [acyl-carrier protein], and carbon dioxide. In Salmonella arizonae (strain ATCC BAA-731 / CDC346-86 / RSK2980), this protein is 8-amino-7-oxononanoate synthase.